Consider the following 104-residue polypeptide: N(4)-acetylcytidine amidohydrolase (104 aa).

The 97-residue stretch at Thr-6–Val-102 folds into the ASCH domain. Residue Lys-20 is the Proton acceptor of the active site. Thr-23 acts as the Nucleophile in catalysis. Glu-73 (proton donor) is an active-site residue.

It belongs to the N(4)-acetylcytidine amidohydrolase family.

It catalyses the reaction N(4)-acetylcytidine + H2O = cytidine + acetate + H(+). The enzyme catalyses N(4)-acetyl-2'-deoxycytidine + H2O = 2'-deoxycytidine + acetate + H(+). It carries out the reaction N(4)-acetylcytosine + H2O = cytosine + acetate + H(+). Catalyzes the hydrolysis of N(4)-acetylcytidine (ac4C). This chain is N(4)-acetylcytidine amidohydrolase, found in Cronobacter sakazakii (strain ATCC BAA-894) (Enterobacter sakazakii).